Reading from the N-terminus, the 78-residue chain is Large ribosomal subunit protein uL29 (78 aa).

Residues 59-78 (VESERKRGKSLSSTQTQKEE) are disordered. Polar residues predominate over residues 68-78 (SLSSTQTQKEE).

The protein belongs to the universal ribosomal protein uL29 family.

The polypeptide is Large ribosomal subunit protein uL29 (Synechococcus sp. (strain JA-3-3Ab) (Cyanobacteria bacterium Yellowstone A-Prime)).